We begin with the raw amino-acid sequence, 344 residues long: RNA 3'-terminal phosphate cyclase (344 aa).

Residues glutamine 103 and 283-287 (HLADQ) contribute to the ATP site. Histidine 308 (tele-AMP-histidine intermediate) is an active-site residue.

This sequence belongs to the RNA 3'-terminal cyclase family. Type 1 subfamily.

The protein resides in the cytoplasm. It carries out the reaction a 3'-end 3'-phospho-ribonucleotide-RNA + ATP = a 3'-end 2',3'-cyclophospho-ribonucleotide-RNA + AMP + diphosphate. Catalyzes the conversion of 3'-phosphate to a 2',3'-cyclic phosphodiester at the end of RNA. The mechanism of action of the enzyme occurs in 3 steps: (A) adenylation of the enzyme by ATP; (B) transfer of adenylate to an RNA-N3'P to produce RNA-N3'PP5'A; (C) and attack of the adjacent 2'-hydroxyl on the 3'-phosphorus in the diester linkage to produce the cyclic end product. The biological role of this enzyme is unknown but it is likely to function in some aspects of cellular RNA processing. This is RNA 3'-terminal phosphate cyclase from Salmonella paratyphi C (strain RKS4594).